The following is a 451-amino-acid chain: Cobalamin reductase PduS (451 aa).

4Fe-4S ferredoxin-type domains are found at residues 255–284 (TVLS…HELS) and 300–330 (PQLL…MRIN). [4Fe-4S] cluster-binding residues include cysteine 264, cysteine 267, cysteine 270, cysteine 274, cysteine 309, cysteine 312, cysteine 315, and cysteine 320.

The protein belongs to the PduS cobalamin reductase family. As to quaternary structure, monomer, forms a complex with PduO. Interacts with PduT, probably via the N-terminus of PduS. [4Fe-4S] cluster is required as a cofactor. FMN serves as cofactor.

The protein resides in the bacterial microcompartment. Its pathway is polyol metabolism; 1,2-propanediol degradation. A bifunctional cobalamin reductase that converts cob(III)alamin to cob(II)alamin and then to cob(I)alamin in the bacterial microcompartment (BMC) dedicated to 1,2-propanediol (1,2-PD) degradation. PduS and PduO allow regeneration of the adenosylcobalamin cofactor within the BMC. Cobalamin reduction probably occurs spontaneously in the presence of free reduced flavin nucleotides, this protein may be involved in electron transfer for this reduction. Functionally, expression of a cosmid containing the full 21-gene pdu operon in E.coli allows E.coli to grow on 1,2-propanediol (1,2-PD) with the appearance of BMCs in its cytoplasm. Its function is as follows. The 1,2-PD-specific bacterial microcompartment (BMC) concentrates low levels of 1,2-PD catabolic enzymes, concentrates volatile reaction intermediates thus enhancing pathway flux and keeps the level of toxic, mutagenic propionaldehyde low. This chain is Cobalamin reductase PduS, found in Citrobacter freundii.